A 67-amino-acid chain; its full sequence is DNA-directed RNA polymerase subunit omega (67 aa).

This sequence belongs to the RNA polymerase subunit omega family. As to quaternary structure, the RNAP catalytic core consists of 2 alpha, 1 beta, 1 beta' and 1 omega subunit. When a sigma factor is associated with the core the holoenzyme is formed, which can initiate transcription.

The catalysed reaction is RNA(n) + a ribonucleoside 5'-triphosphate = RNA(n+1) + diphosphate. In terms of biological role, promotes RNA polymerase assembly. Latches the N- and C-terminal regions of the beta' subunit thereby facilitating its interaction with the beta and alpha subunits. This is DNA-directed RNA polymerase subunit omega from Polaromonas sp. (strain JS666 / ATCC BAA-500).